The following is an 88-amino-acid chain: U-scoloptoxin(12)-Sa1a (88 aa).

A signal peptide spans 1-20 (MKYMIITVVILFTCALKMFC).

The protein belongs to the scoloptoxin-12 family. In terms of processing, contains 3 disulfide bonds. Expressed by the venom gland.

Its subcellular location is the secreted. In Scolopendra alternans (Florida Keys giant centipede), this protein is U-scoloptoxin(12)-Sa1a.